A 332-amino-acid chain; its full sequence is Isopentenyl-diphosphate delta-isomerase (332 aa).

6–7 (RK) provides a ligand contact to substrate. Residues 65 to 67 (AMT), Ser-95, and Asn-123 contribute to the FMN site. Position 95 to 97 (95 to 97 (SGR)) interacts with substrate. Residue Gln-157 coordinates substrate. Glu-158 provides a ligand contact to Mg(2+). Residues Lys-187, Thr-217, 264–266 (GVY), Ala-285, and 285–286 (AR) each bind FMN.

The protein belongs to the IPP isomerase type 2 family. Homooctamer. Dimer of tetramers. Requires FMN as cofactor. NADPH is required as a cofactor. The cofactor is Mg(2+).

Its subcellular location is the cytoplasm. The enzyme catalyses isopentenyl diphosphate = dimethylallyl diphosphate. Its activity is regulated as follows. Competitively inhibited by N,N-dimethyl-2-amino-1-ethyl diphosphate (NIPP) and isopentyl diphosphate. In terms of biological role, involved in the biosynthesis of isoprenoids. Catalyzes the 1,3-allylic rearrangement of the homoallylic substrate isopentenyl (IPP) to its allylic isomer, dimethylallyl diphosphate (DMAPP). This is Isopentenyl-diphosphate delta-isomerase from Thermus thermophilus (strain ATCC BAA-163 / DSM 7039 / HB27).